Here is a 150-residue protein sequence, read N- to C-terminus: Arginine repressor (150 aa).

Belongs to the ArgR family.

The protein resides in the cytoplasm. The protein operates within amino-acid biosynthesis; L-arginine biosynthesis [regulation]. In terms of biological role, regulates arginine biosynthesis genes. The protein is Arginine repressor of Staphylococcus carnosus (strain TM300).